Consider the following 1295-residue polypeptide: Phosphoribosylformylglycinamidine synthase (1295 aa).

The segment at 302–327 (APFSGAATGSGGEIRDEGATGRGSKP) is disordered. Residues 306-317 (GAATGSGGEIRD) and Ala-677 each bind ATP. Positions 678, 717, 721, and 884 each coordinate Mg(2+). Ser-886 is a binding site for ATP. The Glutamine amidotransferase type-1 domain maps to 1042–1295 (MAILREQGVN…MFRNARVYLG (254 aa)). Residue Cys-1135 is the Nucleophile of the active site. Catalysis depends on residues His-1260 and Glu-1262.

The protein in the N-terminal section; belongs to the FGAMS family. Monomer.

It is found in the cytoplasm. It catalyses the reaction N(2)-formyl-N(1)-(5-phospho-beta-D-ribosyl)glycinamide + L-glutamine + ATP + H2O = 2-formamido-N(1)-(5-O-phospho-beta-D-ribosyl)acetamidine + L-glutamate + ADP + phosphate + H(+). The protein operates within purine metabolism; IMP biosynthesis via de novo pathway; 5-amino-1-(5-phospho-D-ribosyl)imidazole from N(2)-formyl-N(1)-(5-phospho-D-ribosyl)glycinamide: step 1/2. Functionally, phosphoribosylformylglycinamidine synthase involved in the purines biosynthetic pathway. Catalyzes the ATP-dependent conversion of formylglycinamide ribonucleotide (FGAR) and glutamine to yield formylglycinamidine ribonucleotide (FGAM) and glutamate. This is Phosphoribosylformylglycinamidine synthase from Pseudoalteromonas atlantica (strain T6c / ATCC BAA-1087).